The chain runs to 646 residues: Replication protein E1 (646 aa).

Residues Lys-83–Lys-85 carry the Nuclear localization signal motif. 3 positions are modified to phosphoserine; by host: Ser-89, Ser-93, and Ser-107. The Nuclear export signal motif lies at Ile-106–Leu-115. Positions Glu-145–Glu-185 are disordered. The span at His-163–Glu-185 shows a compositional bias: basic and acidic residues. Residues Glu-184 to Asp-350 are DNA-binding region. The SF3 helicase domain occupies Ile-449–Val-599. ATP is bound at residue Gly-475 to Ser-482. A Glycyl lysine isopeptide (Lys-Gly) (interchain with G-Cter in SUMO) cross-link involves residue Lys-556.

The protein belongs to the papillomaviridae E1 protein family. In terms of assembly, can form hexamers. Interacts with E2 protein; this interaction increases E1 DNA binding specificity. Interacts with host DNA polymerase subunit POLA2. Interacts with host single stranded DNA-binding protein RPA1. Interacts with host TOP1; this interaction stimulates the enzymatic activity of TOP1. Phosphorylated. In terms of processing, sumoylated.

It is found in the host nucleus. It catalyses the reaction Couples ATP hydrolysis with the unwinding of duplex DNA by translocating in the 3'-5' direction.. The catalysed reaction is ATP + H2O = ADP + phosphate + H(+). Its function is as follows. ATP-dependent DNA 3'-5' helicase required for initiation of viral DNA replication. It forms a complex with the viral E2 protein. The E1-E2 complex binds to the replication origin which contains binding sites for both proteins. During the initial step, a dimer of E1 interacts with a dimer of protein E2 leading to a complex that binds the viral origin of replication with high specificity. Then, a second dimer of E1 displaces the E2 dimer in an ATP-dependent manner to form the E1 tetramer. Following this, two E1 monomers are added to each half of the site, which results in the formation of two E1 trimers on the viral ori. Subsequently, two hexamers will be created. The double hexamer acts as a bi-directional helicase machinery and unwinds the viral DNA and then recruits the host DNA polymerase to start replication. The protein is Replication protein E1 of Homo sapiens (Human).